Here is a 469-residue protein sequence, read N- to C-terminus: MTTFEEFESPSTSFNFQTFDRYQPDFKMIDYSHQQATHEYHLPDQEVFQNQNEFSASPPDISSPFADEKIYKSLPRNKCPSKCLVCRNPAIGYHYDVPSCNGCKTFFRRTIITGRKFTCAKQKKCMDGTEPVDMSKRLCRACRFAKCVEVGMNPMAIQAEVKTDEGKVLRSEVLNQRESLGVVSSLIVTEEDLLSRMIEKLTFVESKVEPLHRSGMPPGYRDIRKLEEILDSKPVLVVTDIPNLKFCPSPCANEKRPRRHFTNYVHTSYLASLESSKMFEFSSQLDLESRILLMKHATLICSNMMNAFFSINEMKSDILRHPDGSMSGHMRKFDRENDVMTDHVKLIQKTLITFLNHKVDKIEYLLFKAIMLCNPAVPGLDSWNQEIIEKERNQYVKALLNYCLLQHGKLQGPTRFATILAMAPIIENQSKNQKDFHVYIKAKHFQKHKKMGTTFRKCISCMFDQIMET.

Residues 80 to 159 (PSKCLVCRNP…VGMNPMAIQA (80 aa)) constitute a DNA-binding region (nuclear receptor). NR C4-type zinc fingers lie at residues 83-103 (CLVC…CNGC) and 119-142 (CAKQ…CRAC). The region spanning 230 to 459 (LDSKPVLVVT…KMGTTFRKCI (230 aa)) is the NR LBD domain.

The protein belongs to the nuclear hormone receptor family.

Its subcellular location is the nucleus. Functionally, orphan nuclear receptor. The protein is Nuclear hormone receptor family member nhr-154 (nhr-154) of Caenorhabditis elegans.